The following is a 140-amino-acid chain: Translation initiation factor 2 subunit beta (140 aa).

The protein belongs to the eIF-2-beta/eIF-5 family. In terms of assembly, heterotrimer composed of an alpha, a beta and a gamma chain.

Functionally, eIF-2 functions in the early steps of protein synthesis by forming a ternary complex with GTP and initiator tRNA. In Pyrococcus horikoshii (strain ATCC 700860 / DSM 12428 / JCM 9974 / NBRC 100139 / OT-3), this protein is Translation initiation factor 2 subunit beta (eif2b).